Reading from the N-terminus, the 437-residue chain is Adenylosuccinate synthetase (437 aa).

GTP-binding positions include 12-18 (GDEGKGK) and 40-42 (GHT). Aspartate 13 acts as the Proton acceptor in catalysis. Mg(2+) contacts are provided by aspartate 13 and glycine 40. Residues 13-16 (DEGK), 38-41 (NAGH), threonine 128, arginine 142, glutamine 223, threonine 238, and arginine 302 contribute to the IMP site. Histidine 41 serves as the catalytic Proton donor. Residue 298 to 304 (TTTGRRR) coordinates substrate. Residues arginine 304, 330–332 (KLD), and 412–414 (SLG) each bind GTP.

The protein belongs to the adenylosuccinate synthetase family. As to quaternary structure, homodimer. Requires Mg(2+) as cofactor.

It localises to the cytoplasm. It catalyses the reaction IMP + L-aspartate + GTP = N(6)-(1,2-dicarboxyethyl)-AMP + GDP + phosphate + 2 H(+). It participates in purine metabolism; AMP biosynthesis via de novo pathway; AMP from IMP: step 1/2. In terms of biological role, plays an important role in the de novo pathway of purine nucleotide biosynthesis. Catalyzes the first committed step in the biosynthesis of AMP from IMP. This is Adenylosuccinate synthetase from Synechococcus sp. (strain RCC307).